Here is a 472-residue protein sequence, read N- to C-terminus: MNVHTAGPRHAEKTRHTATPQRVQPSDDLLRLASNVWPRNITRDETGVACIAGNKLTDLAGEYGTPLFVIDEDDFRFRCREIAAAFGGGENVHYAAKAFLCTEIARWIDEEGLSLDVCSGGELAVALHASFPPERISLHGNNKSVAELKDAVKAGVGYIVLDSTTEIERLDAIAGEAGIVQDVLVRLTVGVEAHTHEFIATAHEDQKFGLSVASGAAMAAVRRVFATDNLRLVGLHSHIGSQIFDVAGFELAAHRVIGLLCDIVGEFDPEKTAQLSIVDLGGGLGISYLPDDDPPPIFELAAKLGAIVSNESAAVGLPVPKLMVEPGRAIAGPGTITLYEVGTIKDVDVSATAHRRYVSIDGGMSDNIRTALYDAQYDVRLVSRTSDAPAAPASIVGKHCESGDIVVRDTWVPDDLKPGDLVGVAATGAYCYSLSSRYNMLGRPAVVAVCAGQARLILRRETVDDLLSLEVR.

The segment at 1 to 23 (MNVHTAGPRHAEKTRHTATPQRV) is disordered. At Lys97 the chain carries N6-(pyridoxal phosphate)lysine. Residues Gly283 and 325-328 (EPGR) contribute to the pyridoxal 5'-phosphate site. Substrate-binding residues include Arg328, Arg369, and Tyr373. The Proton donor role is filled by Cys400. Residues Glu401 and Tyr430 each coordinate substrate. Tyr430 contacts pyridoxal 5'-phosphate.

This sequence belongs to the Orn/Lys/Arg decarboxylase class-II family. LysA subfamily. In terms of assembly, homodimer. Pyridoxal 5'-phosphate serves as cofactor.

The enzyme catalyses meso-2,6-diaminopimelate + H(+) = L-lysine + CO2. It participates in amino-acid biosynthesis; L-lysine biosynthesis via DAP pathway; L-lysine from DL-2,6-diaminopimelate: step 1/1. Its function is as follows. Specifically catalyzes the decarboxylation of meso-diaminopimelate (meso-DAP) to L-lysine. The chain is Diaminopimelate decarboxylase from Mycobacterium leprae (strain TN).